Consider the following 377-residue polypeptide: Histone deacetylase 8 (377 aa).

Residues 14 to 324 (LPPVYIYSPE…WTYLTGVILG (311 aa)) are histone deacetylase. The residue at position 39 (Ser-39) is a Phosphoserine. Residue Asp-101 participates in substrate binding. The active-site Proton acceptor is His-143. Gly-151 contributes to the substrate binding site. A divalent metal cation contacts are provided by Asp-178, His-180, and Asp-267. Tyr-306 serves as a coordination point for substrate.

Belongs to the histone deacetylase family. HD type 1 subfamily. As to quaternary structure, interacts with CBFA2T3. Interacts with phosphorylated SMG5/EST1B; this interaction protects SMG5 from ubiquitin-mediated degradation. Associates with alpha-SMA (smooth muscle alpha-actin). The cofactor is a divalent metal cation. Post-translationally, phosphorylated by PKA on serine 39. Phosphorylation reduces deacetylase activity observed preferentially on histones H3 and H4.

It is found in the nucleus. Its subcellular location is the chromosome. It localises to the cytoplasm. It catalyses the reaction N(6)-acetyl-L-lysyl-[histone] + H2O = L-lysyl-[histone] + acetate. The catalysed reaction is N(6)-acetyl-L-lysyl-[protein] + H2O = L-lysyl-[protein] + acetate. The enzyme catalyses N(6)-(2E)-butenoyl-L-lysyl-[protein] + H2O = (2E)-2-butenoate + L-lysyl-[protein]. Its activity is regulated as follows. Its activity is inhibited by trichostatin A (TSA) and butyrate, 2 well known histone deacetylase inhibitors. In terms of biological role, histone deacetylase that catalyzes the deacetylation of lysine residues on the N-terminal part of the core histones (H2A, H2B, H3 and H4). Histone deacetylation gives a tag for epigenetic repression and plays an important role in transcriptional regulation, cell cycle progression and developmental events. Histone deacetylases act via the formation of large multiprotein complexes. Also involved in the deacetylation of cohesin complex protein SMC3 regulating release of cohesin complexes from chromatin. May play a role in smooth muscle cell contractility. In addition to protein deacetylase activity, also has protein-lysine deacylase activity: acts as a protein decrotonylase by mediating decrotonylation ((2E)-butenoyl) of histones. The protein is Histone deacetylase 8 (Hdac8) of Rattus norvegicus (Rat).